Consider the following 156-residue polypeptide: Ribosomal RNA large subunit methyltransferase H (156 aa).

S-adenosyl-L-methionine-binding positions include Leu73, Gly104, and Leu123 to Met128.

It belongs to the RNA methyltransferase RlmH family. In terms of assembly, homodimer.

The protein localises to the cytoplasm. The enzyme catalyses pseudouridine(1915) in 23S rRNA + S-adenosyl-L-methionine = N(3)-methylpseudouridine(1915) in 23S rRNA + S-adenosyl-L-homocysteine + H(+). Specifically methylates the pseudouridine at position 1915 (m3Psi1915) in 23S rRNA. The protein is Ribosomal RNA large subunit methyltransferase H of Tolumonas auensis (strain DSM 9187 / NBRC 110442 / TA 4).